The primary structure comprises 207 residues: Urease accessory protein UreG (207 aa).

12 to 19 serves as a coordination point for GTP; that stretch reads GPVGAGKT.

This sequence belongs to the SIMIBI class G3E GTPase family. UreG subfamily. As to quaternary structure, homodimer. UreD, UreF and UreG form a complex that acts as a GTP-hydrolysis-dependent molecular chaperone, activating the urease apoprotein by helping to assemble the nickel containing metallocenter of UreC. The UreE protein probably delivers the nickel.

It localises to the cytoplasm. Facilitates the functional incorporation of the urease nickel metallocenter. This process requires GTP hydrolysis, probably effectuated by UreG. In Cereibacter sphaeroides (strain ATCC 17029 / ATH 2.4.9) (Rhodobacter sphaeroides), this protein is Urease accessory protein UreG.